The following is a 325-amino-acid chain: MRVENNNVSGQNHDPEQIDLIDLLVQLWRGKMTIIISVIVAIALAIGYLAVAKEKWTSTAIVTQPDVGQIAGYNNAMNVIYGQATPKVSDLQETLIGRFSSAFSALAETLDNQEEPEKLTIEPSVKNQQLPLTVSYVGQTAEGAQMKLAQYIQQVDDKVNQELEKDLKDNIALGRKNLQDSLRTQEVVAQEQKDLRIRQIQEALQYANQAQVTKPQVQQTEDVTQDTLFLLGSEALESMIKHEATRPLVFSPSYYQTRQNLLDIENLKVDDLDIHAYRYVMKPTLPIRRDSPKKAITLILAVLLGGMVGAGIVLGRNALRNYNAK.

Residues 1–31 lie on the Cytoplasmic side of the membrane; sequence MRVENNNVSGQNHDPEQIDLIDLLVQLWRGK. A helical transmembrane segment spans residues 32–52; the sequence is MTIIISVIVAIALAIGYLAVA. Over 53–294 the chain is Periplasmic; it reads KEKWTSTAIV…LPIRRDSPKK (242 aa). A helical transmembrane segment spans residues 295–315; the sequence is AITLILAVLLGGMVGAGIVLG. At 316-325 the chain is on the cytoplasmic side; sequence RNALRNYNAK.

Belongs to the WzzB/Cld/Rol family.

The protein localises to the cell inner membrane. Its pathway is bacterial outer membrane biogenesis; lipopolysaccharide biosynthesis. In terms of biological role, confers a modal distribution of chain length on the O-antigen component of lipopolysaccharide (LPS). Gives rise to a reduced number of short chain molecules and increases in numbers of longer molecules. The protein is Chain length determinant protein (wzzB) of Shigella dysenteriae.